A 188-amino-acid chain; its full sequence is uncharacterized protein (188 aa).

Residues 1 to 18 (MTLRIIAHLLALTASLAG) form the signal peptide. C19 carries the N-palmitoyl cysteine lipid modification. C19 carries the S-diacylglycerol cysteine lipid modification.

Its subcellular location is the cell membrane. This is an uncharacterized protein from Sinorhizobium fredii (strain NBRC 101917 / NGR234).